The chain runs to 185 residues: Elongation factor P (185 aa).

This sequence belongs to the elongation factor P family.

The protein resides in the cytoplasm. It participates in protein biosynthesis; polypeptide chain elongation. Its function is as follows. Involved in peptide bond synthesis. Stimulates efficient translation and peptide-bond synthesis on native or reconstituted 70S ribosomes in vitro. Probably functions indirectly by altering the affinity of the ribosome for aminoacyl-tRNA, thus increasing their reactivity as acceptors for peptidyl transferase. The polypeptide is Elongation factor P (Bacillus cereus (strain ATCC 10987 / NRS 248)).